Reading from the N-terminus, the 198-residue chain is Peptidyl-tRNA hydrolase (198 aa).

Tyrosine 14 provides a ligand contact to tRNA. Catalysis depends on histidine 19, which acts as the Proton acceptor. The tRNA site is built by tyrosine 64, asparagine 66, and asparagine 112.

The protein belongs to the PTH family. Monomer.

The protein localises to the cytoplasm. The catalysed reaction is an N-acyl-L-alpha-aminoacyl-tRNA + H2O = an N-acyl-L-amino acid + a tRNA + H(+). In terms of biological role, hydrolyzes ribosome-free peptidyl-tRNAs (with 1 or more amino acids incorporated), which drop off the ribosome during protein synthesis, or as a result of ribosome stalling. Functionally, catalyzes the release of premature peptidyl moieties from peptidyl-tRNA molecules trapped in stalled 50S ribosomal subunits, and thus maintains levels of free tRNAs and 50S ribosomes. The chain is Peptidyl-tRNA hydrolase from Beijerinckia indica subsp. indica (strain ATCC 9039 / DSM 1715 / NCIMB 8712).